A 398-amino-acid chain; its full sequence is Acetate kinase (398 aa).

N9 is a binding site for Mg(2+). K16 contacts ATP. R90 provides a ligand contact to substrate. The Proton donor/acceptor role is filled by D147. ATP contacts are provided by residues 207-211 (HIGNG), 282-284 (DLR), and 330-334 (GVGEN). Position 384 (E384) interacts with Mg(2+).

Belongs to the acetokinase family. Homodimer. The cofactor is Mg(2+). It depends on Mn(2+) as a cofactor.

It is found in the cytoplasm. It catalyses the reaction acetate + ATP = acetyl phosphate + ADP. Its pathway is metabolic intermediate biosynthesis; acetyl-CoA biosynthesis; acetyl-CoA from acetate: step 1/2. Functionally, catalyzes the formation of acetyl phosphate from acetate and ATP. Can also catalyze the reverse reaction. In Staphylococcus carnosus (strain TM300), this protein is Acetate kinase.